The primary structure comprises 499 residues: Lanosterol 14-alpha demethylase (499 aa).

Residues 13–35 (SAVLQMSLTSVLLTASVFTLTLG) form a helical membrane-spanning segment. Cysteine 441 contacts heme.

The protein belongs to the cytochrome P450 family. It depends on heme as a cofactor. As to expression, strongly expressed in intestine. Moderately expressed in liver, with higher levels in females compared to males. Also detected at low levels in brain, eye, kidney and testis.

It localises to the endoplasmic reticulum membrane. Its subcellular location is the membrane. The catalysed reaction is a 14alpha-methyl steroid + 3 reduced [NADPH--hemoprotein reductase] + 3 O2 = a Delta(14) steroid + formate + 3 oxidized [NADPH--hemoprotein reductase] + 4 H2O + 4 H(+). It catalyses the reaction lanosterol + 3 reduced [NADPH--hemoprotein reductase] + 3 O2 = 4,4-dimethyl-5alpha-cholesta-8,14,24-trien-3beta-ol + formate + 3 oxidized [NADPH--hemoprotein reductase] + 4 H2O + 4 H(+). It carries out the reaction 24,25-dihydrolanosterol + 3 reduced [NADPH--hemoprotein reductase] + 3 O2 = 4,4-dimethyl-8,14-cholestadien-3beta-ol + formate + 3 oxidized [NADPH--hemoprotein reductase] + 4 H2O + 4 H(+). The enzyme catalyses a 14alpha-methyl steroid + reduced [NADPH--hemoprotein reductase] + O2 = a 14alpha-hydroxymethyl steroid + oxidized [NADPH--hemoprotein reductase] + H2O + H(+). The catalysed reaction is a 14alpha-hydroxymethyl steroid + reduced [NADPH--hemoprotein reductase] + O2 = a 14alpha-formyl steroid + oxidized [NADPH--hemoprotein reductase] + 2 H2O + H(+). It catalyses the reaction a 14alpha-formyl steroid + reduced [NADPH--hemoprotein reductase] + O2 = a Delta(14) steroid + formate + oxidized [NADPH--hemoprotein reductase] + H2O + 2 H(+). It carries out the reaction lanosterol + reduced [NADPH--hemoprotein reductase] + O2 = 32-hydroxylanosterol + oxidized [NADPH--hemoprotein reductase] + H2O + H(+). The enzyme catalyses 32-hydroxylanosterol + reduced [NADPH--hemoprotein reductase] + O2 = 32-oxolanosterol + oxidized [NADPH--hemoprotein reductase] + 2 H2O + H(+). The catalysed reaction is 32-oxolanosterol + reduced [NADPH--hemoprotein reductase] + O2 = 4,4-dimethyl-5alpha-cholesta-8,14,24-trien-3beta-ol + formate + oxidized [NADPH--hemoprotein reductase] + H2O + 2 H(+). It catalyses the reaction 24,25-dihydrolanosterol + reduced [NADPH--hemoprotein reductase] + O2 = 32-hydroxy-24,25-dihydrolanosterol + oxidized [NADPH--hemoprotein reductase] + H2O + H(+). It carries out the reaction 32-hydroxy-24,25-dihydrolanosterol + reduced [NADPH--hemoprotein reductase] + O2 = 32-oxo-24,25-dihydrolanosterol + oxidized [NADPH--hemoprotein reductase] + 2 H2O + H(+). The enzyme catalyses 32-oxo-24,25-dihydrolanosterol + reduced [NADPH--hemoprotein reductase] + O2 = 4,4-dimethyl-8,14-cholestadien-3beta-ol + formate + oxidized [NADPH--hemoprotein reductase] + H2O + 2 H(+). It functions in the pathway steroid biosynthesis; zymosterol biosynthesis; zymosterol from lanosterol: step 1/6. Its activity is regulated as follows. Inhibited by ketoconazole. May also be inhibited to a lesser extent by propiconazole. Sterol 14alpha-demethylase that plays a critical role in the cholesterol biosynthesis pathway, being cholesterol the major sterol component in deuterostome membranes as well as a precursor for steroid hormone synthesis. Cytochrome P450 monooxygenase that catalyzes the three-step oxidative removal of the 14alpha-methyl group (C-32) of sterols such as lanosterol (lanosta-8,24-dien-3beta-ol) and 24,25-dihydrolanosterol (DHL) in the form of formate, and converts the sterols to 4,4-dimethyl-5alpha-cholesta-8,14,24-trien-3beta-ol and 4,4-dimethyl-8,14-cholestadien-3beta-ol, respectively, which are intermediates of cholesterol biosynthesis. Can also demethylate substrates not intrinsic to deuterostomes, such as eburicol (24-methylene-24,25-dihydrolanosterol), but at a lower rate than DHL. The polypeptide is Lanosterol 14-alpha demethylase (Danio rerio (Zebrafish)).